A 190-amino-acid chain; its full sequence is Putative histone H1.6 (190 aa).

The tract at residues 1–29 (MSDVAVAETPAVKTPTKAPKANATKVPKV) is disordered. S2 carries the N-acetylserine modification. Low complexity predominate over residues 9 to 29 (TPAVKTPTKAPKANATKVPKV). Positions 34–110 (AHPPFINMVT…GATGRFRVAE (77 aa)) constitute an H15 domain. The segment at 141 to 190 (KKTGDKVKKAKSPKKIAKPAAKKATKSPSKKVAPKKAAAKPAKKTAALKA) is disordered. Residues 148-183 (KKAKSPKKIAKPAAKKATKSPSKKVAPKKAAAKPAK) are compositionally biased toward basic residues.

It belongs to the histone H1/H5 family.

It localises to the nucleus. The protein resides in the chromosome. In terms of biological role, histones H1 are necessary for the condensation of nucleosome chains into higher-order structures. The protein is Putative histone H1.6 (hil-6) of Caenorhabditis elegans.